The sequence spans 245 residues: Complement C1q subcomponent subunit C (245 aa).

Positions 1–28 (MVVGTSCQPQHGLYLLLLLLALPLRSQA) are cleaved as a signal peptide. Residues 31–112 (GCYGIPGMPG…GPPGEPGEEG (82 aa)) form the Collagen-like domain. P36, P39, P42, P45, and P63 each carry 4-hydroxyproline. The tract at residues 42 to 119 (PGTPGKDGHD…EEGRYKQKHQ (78 aa)) is disordered. K75 carries the post-translational modification 5-hydroxylysine. Residue K75 is glycosylated (O-linked (Gal...) hydroxylysine). Residues P81, P96, P99, and P105 each carry the 4-hydroxyproline modification. Pro residues predominate over residues 98–107 (DPGPRGPPGE). A C1q domain is found at 115 to 245 (KQKHQSVFTV…VFSGFLLFPD (131 aa)). Residues C179 and C193 are joined by a disulfide bond.

As to quaternary structure, core component of the complement C1 complex, a calcium-dependent complex composed of 1 molecule of the C1Q subcomplex, 2 molecules of C1R and 2 molecules of C1S. The C1Q subcomplex is composed 18 subunits: 3 chains of C1QA, C1QB, and C1QC trimerize to form 6 collagen-like triple helices connected to six globular ligand-recognition modules (C1q domain). Post-translationally, O-linked glycans consist of Glc-Gal disaccharides bound to the oxygen atom of post-translationally added hydroxyl groups.

Its subcellular location is the secreted. The protein resides in the cell surface. With respect to regulation, the C1Q subcomplex is inhibited by sulfated molecules, such as triterpenoid sulfates, heparan sulfate, or chondroitin sulfates. In terms of biological role, core component of the complement C1 complex, a multiprotein complex that initiates the classical pathway of the complement system, a cascade of proteins that leads to phagocytosis and breakdown of pathogens and signaling that strengthens the adaptive immune system. The classical complement pathway is initiated by the C1Q subcomplex of the C1 complex, which specifically binds IgG or IgM immunoglobulins complexed with antigens, forming antigen-antibody complexes on the surface of pathogens: C1QA, together with C1QB and C1QC, specifically recognizes and binds the Fc regions of IgG or IgM via its C1q domain. Immunoglobulin-binding activates the proenzyme C1R, which cleaves C1S, initiating the proteolytic cascade of the complement system. The C1Q subcomplex is activated by a hexamer of IgG complexed with antigens, while it is activated by a pentameric IgM. The C1Q subcomplex also recognizes and binds phosphatidylserine exposed on the surface of cells undergoing programmed cell death, possibly promoting activation of the complement system. This Rattus norvegicus (Rat) protein is Complement C1q subcomponent subunit C.